A 299-amino-acid chain; its full sequence is Acetyl-hydrolase (299 aa).

Residues 73–75 (HGG) carry the Involved in the stabilization of the negatively charged intermediate by the formation of the oxyanion hole motif. Active-site residues include S143, E237, and H267.

It belongs to the 'GDXG' lipolytic enzyme family.

It functions in the pathway secondary metabolite biosynthesis; bialaphos biosynthesis. Its function is as follows. This protein removes the N-acetyl group from bialaphos as one of the final steps of biosynthesis of phosphinothricin tripeptide (PTT), also known as bialaphos (BA), a natural-product antibiotic and potent herbicide. This chain is Acetyl-hydrolase (bah), found in Streptomyces hygroscopicus.